The chain runs to 809 residues: TLR4 interactor with leucine rich repeats (809 aa).

The N-terminal stretch at 1-25 (MEGVGAVRFWLVVCGCLAFPPRAES) is a signal peptide. The LRRNT domain occupies 26–57 (VCPERCDCQHPQHLLCTNRGLRAVPKTSSLPS). Over 26–694 (VCPERCDCQH…AGGRGGVDYQ (669 aa)) the chain is Extracellular. LRR repeat units follow at residues 61–81 (VLTY…DFHR), 84–105 (QLRR…TFEK), 108–129 (RLEE…TLAP), 132–153 (KLRI…SFEG), 156–177 (SLVK…VFAP), 180–201 (NLLY…AFSQ), 204–223 (KLRF…RHAA), 230–251 (SLST…VFQH), 254–275 (RLGL…AFWG), 278–298 (ALRE…TLLE), 302–323 (SLEA…TFGH), and 326–347 (RLRE…IFAA). The N-linked (GlcNAc...) asparagine glycan is linked to Asn73. The LRRCT domain maps to 359 to 416 (NGWTCDCRLRGLKRWMGNWHSQGRLLTVFVQCRHPPALRGKYLDYLDDQLLQNGSCVD). Asn411 is a glycosylation site (N-linked (GlcNAc...) asparagine). 2 disordered regions span residues 412 to 462 (GSCV…RGRL) and 483 to 563 (RLSR…SAVQ). The segment covering 421–436 (PTAGSRQWPLPTSSEE) has biased composition (polar residues). Positions 488–506 (GPGPHQGPSAAAPGSAPQS) are enriched in low complexity. Polar residues predominate over residues 521 to 543 (ANLSQTEPTPTSEPASGTPSARD). Over residues 554 to 563 (ASEQQESAVQ) the composition is skewed to low complexity. N-linked (GlcNAc...) asparagine glycosylation occurs at Asn587. A helical membrane pass occupies residues 695-715 (LLTLVLLAVNALLVLLALAAW). Residues 716 to 809 (GSRWLRRKLR…EDHLLQRFAD (94 aa)) are Cytoplasmic-facing. Ser796 bears the Phosphoserine mark.

In terms of assembly, belongs to the lipopolysaccharide (LPS) receptor, a multi-protein complex containing at least CD14, MD-2 and TLR4. Interacts with TLR4; this interaction is greatly enhanced by LPS stimulation. Interacts with LPS. N-glycolysaled. As to expression, highly expressed in brain, spinal cord and lung.

Its subcellular location is the membrane. Component of the TLR4 signaling complex. Mediates the innate immune response to bacterial lipopolysaccharide (LPS) leading to cytokine secretion. This chain is TLR4 interactor with leucine rich repeats (Tril), found in Mus musculus (Mouse).